Consider the following 249-residue polypeptide: Bax inhibitor 1 (249 aa).

6 consecutive transmembrane segments (helical) span residues L39–V59, G65–F85, I93–V113, I119–I139, G151–G171, and H213–L233.

This sequence belongs to the BI1 family. In terms of tissue distribution, ubiquitous.

It localises to the membrane. Functionally, suppressor of apoptosis. The protein is Bax inhibitor 1 (BI1) of Oryza sativa subsp. japonica (Rice).